A 287-amino-acid chain; its full sequence is Protease HtpX (287 aa).

2 helical membrane passes run 4-24 and 33-53; these read IFLLIATNFAILLVASIVMSI and GGLLVFAAIFGFGGSFISLAI. His-139 contributes to the Zn(2+) binding site. Glu-140 is a catalytic residue. His-143 contributes to the Zn(2+) binding site. 2 helical membrane-spanning segments follow: residues 154 to 174 and 195 to 215; these read LIQGVVNTFVIFAARVVAGII and AVVFVLDMLFGILASMIVAYF. Glu-220 is a Zn(2+) binding site.

It belongs to the peptidase M48B family. The cofactor is Zn(2+).

It is found in the cell inner membrane. The sequence is that of Protease HtpX from Shewanella frigidimarina (strain NCIMB 400).